Here is a 145-residue protein sequence, read N- to C-terminus: Protein SprT-like (145 aa).

Residues 5–141 (NYVKQVSVED…CGRCMGKLRL (137 aa)) form the SprT-like domain. Position 64 (histidine 64) interacts with Zn(2+). Residue glutamate 65 is part of the active site. Zn(2+) is bound at residue histidine 68.

This sequence belongs to the SprT family. Requires Zn(2+) as cofactor.

It is found in the cytoplasm. This chain is Protein SprT-like, found in Streptococcus sanguinis (strain SK36).